The sequence spans 353 residues: UPF0283 membrane protein CKO_01392 (353 aa).

The next 3 membrane-spanning stretches (helical) occupy residues Met70–Thr90, Trp99–Val119, and Glu213–Trp233.

It belongs to the UPF0283 family.

The protein resides in the cell inner membrane. This Citrobacter koseri (strain ATCC BAA-895 / CDC 4225-83 / SGSC4696) protein is UPF0283 membrane protein CKO_01392.